The chain runs to 480 residues: Glutamate--tRNA ligase (480 aa).

The short motif at 9–19 (PSPTGNLHIGT) is the 'HIGH' region element. A 'KMSKS' region motif is present at residues 247-251 (KLSKR). K250 serves as a coordination point for ATP.

Belongs to the class-I aminoacyl-tRNA synthetase family. Glutamate--tRNA ligase type 1 subfamily. As to quaternary structure, monomer.

Its subcellular location is the cytoplasm. It carries out the reaction tRNA(Glu) + L-glutamate + ATP = L-glutamyl-tRNA(Glu) + AMP + diphosphate. Catalyzes the attachment of glutamate to tRNA(Glu) in a two-step reaction: glutamate is first activated by ATP to form Glu-AMP and then transferred to the acceptor end of tRNA(Glu). This Nostoc sp. (strain PCC 7120 / SAG 25.82 / UTEX 2576) protein is Glutamate--tRNA ligase.